Consider the following 89-residue polypeptide: UPF0147 protein Saci_0891 (89 aa).

This sequence belongs to the UPF0147 family.

The polypeptide is UPF0147 protein Saci_0891 (Sulfolobus acidocaldarius (strain ATCC 33909 / DSM 639 / JCM 8929 / NBRC 15157 / NCIMB 11770)).